The sequence spans 424 residues: MSFTQPNLLFPPTVLSVGGLTQYIQTLLEQDEELMQVWVTGEVSSASQHRSGLFFTLQDPDERVALRCIVWASQLEKLSILPVPGEQVILLGRIRVYPQRGEYQLMVWQALPAGEGLMALRYRQLRDRLETEGLFDPARKRPLPPHPQTIAVVTSPQAAAWGDIQRTLSHRYPGLRVLLSPALVQGDQAPDSIVAAIERVEKDGRAEVLILSRGGGATEDMACFNHERVVRAIAECSIPVIAGIGHQRDESLADLVADVHVHTPTAAAQLAVPDLAELYTEHCQRLDHLITAGQTRLALAQNQLQHQNRRLKRLPLERQLVQEGRAIAHLKQQLIQTVSQQLQQRLTHQQLLAQKLQSLDPRAILQRGYAIARRQNGQILRTIAALQEGDDLTLQLSDGQVKVQVRKIMAAGTGHEAESEQMEL.

The protein belongs to the XseA family. As to quaternary structure, heterooligomer composed of large and small subunits.

The protein localises to the cytoplasm. It catalyses the reaction Exonucleolytic cleavage in either 5'- to 3'- or 3'- to 5'-direction to yield nucleoside 5'-phosphates.. Bidirectionally degrades single-stranded DNA into large acid-insoluble oligonucleotides, which are then degraded further into small acid-soluble oligonucleotides. The sequence is that of Exodeoxyribonuclease 7 large subunit from Cyanothece sp. (strain PCC 7425 / ATCC 29141).